The following is a 217-amino-acid chain: Large ribosomal subunit protein uL29m (217 aa).

The protein belongs to the universal ribosomal protein uL29 family. In terms of assembly, component of the mitochondrial large ribosomal subunit. Mature mitochondrial ribosomes consist of a small (37S) and a large (54S) subunit. The 37S subunit contains at least 33 different proteins and 1 molecule of RNA (15S). The 54S subunit contains at least 45 different proteins and 1 molecule of RNA (21S).

Its subcellular location is the mitochondrion. This Neosartorya fischeri (strain ATCC 1020 / DSM 3700 / CBS 544.65 / FGSC A1164 / JCM 1740 / NRRL 181 / WB 181) (Aspergillus fischerianus) protein is Large ribosomal subunit protein uL29m (mrpl4).